The following is a 242-amino-acid chain: Uridylate kinase (242 aa).

Residue 17–20 (KLSG) participates in ATP binding. Gly-59 contacts UMP. ATP-binding residues include Gly-60 and Arg-64. Residues Asp-79 and 140–147 (LGNPFFTT) each bind UMP. Residues Thr-167, Tyr-173, and Asp-176 each contribute to the ATP site.

This sequence belongs to the UMP kinase family. Homohexamer.

Its subcellular location is the cytoplasm. The catalysed reaction is UMP + ATP = UDP + ADP. The protein operates within pyrimidine metabolism; CTP biosynthesis via de novo pathway; UDP from UMP (UMPK route): step 1/1. Its activity is regulated as follows. Inhibited by UTP. In terms of biological role, catalyzes the reversible phosphorylation of UMP to UDP. This is Uridylate kinase from Buchnera aphidicola subsp. Baizongia pistaciae (strain Bp).